A 503-amino-acid chain; its full sequence is 2-(3-amino-3-carboxypropyl)histidine synthase subunit 2 (503 aa).

[4Fe-4S] cluster-binding residues include Cys93, Cys114, and Cys334. A disordered region spans residues 464-503 (GLDSVDEGEGPSKLYEGQSGIAKGYVGEGSKEKIQRDFGK). Over residues 492–503 (GSKEKIQRDFGK) the composition is skewed to basic and acidic residues.

It belongs to the DPH1/DPH2 family. DPH2 subfamily. As to quaternary structure, component of the 2-(3-amino-3-carboxypropyl)histidine synthase complex composed of dph1, dph2, dph3 and a NADH-dependent reductase, predominantly cbr1. The cofactor is [4Fe-4S] cluster.

It localises to the cytoplasm. It functions in the pathway protein modification; peptidyl-diphthamide biosynthesis. Its function is as follows. Required for the first step of diphthamide biosynthesis, a post-translational modification of histidine which occurs in elongation factor 2. Dph1 and dph2 transfer a 3-amino-3-carboxypropyl (ACP) group from S-adenosyl-L-methionine (SAM) to a histidine residue, the reaction is assisted by a reduction system comprising dph3 and a NADH-dependent reductase, predominantly cbr1. Facilitates the reduction of the catalytic iron-sulfur cluster found in the dph1 subunit. In Schizosaccharomyces pombe (strain 972 / ATCC 24843) (Fission yeast), this protein is 2-(3-amino-3-carboxypropyl)histidine synthase subunit 2.